The chain runs to 2601 residues: Centrosomal protein of 295 kDa (2601 aa).

A necessary for centriole targeting and microtubule association region spans residues 1-560 (MKRKVVNTHK…KKTQPTGVGI (560 aa)). A Phosphoserine modification is found at Ser-14. Coiled coils occupy residues 207-273 (KRPD…EDLA) and 500-552 (AARI…KRKK). Ser-654 and Ser-938 each carry phosphoserine. Residues 1008–1029 (PSADTKSGKIQEQHSSKSEKGL) are disordered. The span at 1013-1027 (KSGKIQEQHSSKSEK) shows a compositional bias: basic and acidic residues. Coiled-coil stretches lie at residues 1053–1082 (LHDSLKLLQEQLTKQRDTLQARHEAQVELL) and 1498–1544 (IQSH…VSSE). Residues 1558–1580 (ADSERTQKSFPTKSNDTLPSSHR) form a disordered region. Polar residues predominate over residues 1565-1577 (KSFPTKSNDTLPS). Ser-1637 carries the phosphoserine modification. Residues 1728–1758 (QEKLLVQRQTALQQQIQKHEETLKDFFKDSQ) adopt a coiled-coil conformation. Basic and acidic residues-rich tracts occupy residues 1795-1827 (RHADRNNSDDNHLASEDTSAKQSGEHLEKDLGR), 1985-2003 (FSEHMDDSKQESTTSKEEE), and 2100-2112 (DNRDFYQRSDSSS). Disordered regions lie at residues 1795 to 1834 (RHADRNNSDDNHLASEDTSAKQSGEHLEKDLGRRSSKPPV), 1979 to 2004 (LTDPESFSEHMDDSKQESTTSKEEET), and 2085 to 2117 (HPDFDLSSSSSGISPDNRDFYQRSDSSSESHCA). A Phosphothreonine modification is found at Thr-2473. An ALMS motif region spans residues 2478–2601 (SLQEAFIKRK…LEKLRAKNTC (124 aa)). The stretch at 2556–2581 (RLYNQLAEVKQQKEEKTKQEAYAQNR) forms a coiled coil.

Interacts (via ALMS motif) with microtubules; this interaction is direct.

It localises to the cytoplasm. The protein resides in the cytoskeleton. Its subcellular location is the microtubule organizing center. The protein localises to the centrosome. It is found in the centriole. It localises to the spindle. Its function is as follows. Centriole-enriched microtubule-binding protein involved in centriole biogenesis. Essential for the generation of the distal portion of new-born centrioles in a CPAP- and CEP120-mediated elongation dependent manner during the cell cycle S/G2 phase after formation of the initiating cartwheel structure. Required for the recruitment of centriolar proteins, such as POC1B, POC5 and CEP135, into the distal portion of centrioles. Also required for centriole-to-centrosome conversion during mitotic progression, but is dispensable for cartwheel removal or centriole disengagement. Binds to and stabilizes centriolar microtubule. May be involved in ciliogenesis. The polypeptide is Centrosomal protein of 295 kDa (Homo sapiens (Human)).